Consider the following 179-residue polypeptide: Methylated-DNA--protein-cysteine methyltransferase, inducible (179 aa).

The active-site Nucleophile; methyl group acceptor is the cysteine 141.

The protein belongs to the MGMT family.

The catalysed reaction is a 6-O-methyl-2'-deoxyguanosine in DNA + L-cysteinyl-[protein] = S-methyl-L-cysteinyl-[protein] + a 2'-deoxyguanosine in DNA. It carries out the reaction a 4-O-methyl-thymidine in DNA + L-cysteinyl-[protein] = a thymidine in DNA + S-methyl-L-cysteinyl-[protein]. Its function is as follows. Involved in the cellular defense against the biological effects of O6-methylguanine (O6-MeG) and O4-methylthymine (O4-MeT) in DNA. Repairs the methylated nucleobase in DNA by stoichiometrically transferring the methyl group to a cysteine residue in the enzyme. This is a suicide reaction: the enzyme is irreversibly inactivated. This Bacillus subtilis (strain 168) protein is Methylated-DNA--protein-cysteine methyltransferase, inducible (adaB).